The chain runs to 437 residues: MNYTTQMDAAKKGIVTKEMEIVAKKENMNVKDLMELVSKGKVAIPANKNHKSLDPEGIGQGLRTKINVNLGISKDCYNIDMELEKVQKAIDMKAEAIMDLSCFGKTEEFRKRLIDMSPAIIGTVPIYDAVGFYDKELKDITSEEFLKVAEKHAENGADFLTIHVGMNRKTAATFKKNPRRMNIVSRGGSLLYAWMELNNKENPFYEGFNKLLDICEKYDVTLSLGDACRPGCIEDSTDASQIEELIALGELTKRAWERNVQVIIEGPGHMTLDEIETNMKIEKKLCHGAPFYVLGPIVTDIAPGYDHITSAIGGAIAATHGADFLCYVTPAEHLRLPNLDDMKEGIIATKIAAHAADLAKGVKGARDWDNAMAKARRDLDWERMFELSIDEEKARRYREESKAKSKDSCTMCGKMCAVRNMNRVTEGKDLNMLRDDD.

Residues N69, M98, Y127, H163, 185–187, 226–229, and E265 contribute to the substrate site; these read SRG and DACR. Residue H269 coordinates Zn(2+). Y292 is a binding site for substrate. Zn(2+) is bound at residue H333. C409, C412, and C416 together coordinate [4Fe-4S] cluster.

The protein belongs to the ThiC family. [4Fe-4S] cluster serves as cofactor.

The enzyme catalyses 5-amino-1-(5-phospho-beta-D-ribosyl)imidazole + S-adenosyl-L-methionine = 4-amino-2-methyl-5-(phosphooxymethyl)pyrimidine + CO + 5'-deoxyadenosine + formate + L-methionine + 3 H(+). Its pathway is cofactor biosynthesis; thiamine diphosphate biosynthesis. Catalyzes the synthesis of the hydroxymethylpyrimidine phosphate (HMP-P) moiety of thiamine from aminoimidazole ribotide (AIR) in a radical S-adenosyl-L-methionine (SAM)-dependent reaction. The sequence is that of Phosphomethylpyrimidine synthase from Clostridium botulinum (strain Langeland / NCTC 10281 / Type F).